The following is a 486-amino-acid chain: UDP-N-acetylmuramoyl-L-alanyl-D-glutamate--2,6-diaminopimelate ligase (486 aa).

Ser31 provides a ligand contact to UDP-N-acetyl-alpha-D-muramoyl-L-alanyl-D-glutamate. 109–115 (GTNGKTT) provides a ligand contact to ATP. UDP-N-acetyl-alpha-D-muramoyl-L-alanyl-D-glutamate is bound by residues Asn150, 151–152 (TT), Ser178, and Arg186. Lys218 bears the N6-carboxylysine mark. Meso-2,6-diaminopimelate contacts are provided by residues Arg381, 405–408 (DNPR), Gly455, and Glu459. Positions 405-408 (DNPR) match the Meso-diaminopimelate recognition motif motif.

Belongs to the MurCDEF family. MurE subfamily. Mg(2+) is required as a cofactor. Carboxylation is probably crucial for Mg(2+) binding and, consequently, for the gamma-phosphate positioning of ATP.

Its subcellular location is the cytoplasm. The enzyme catalyses UDP-N-acetyl-alpha-D-muramoyl-L-alanyl-D-glutamate + meso-2,6-diaminopimelate + ATP = UDP-N-acetyl-alpha-D-muramoyl-L-alanyl-gamma-D-glutamyl-meso-2,6-diaminopimelate + ADP + phosphate + H(+). Its pathway is cell wall biogenesis; peptidoglycan biosynthesis. Its function is as follows. Catalyzes the addition of meso-diaminopimelic acid to the nucleotide precursor UDP-N-acetylmuramoyl-L-alanyl-D-glutamate (UMAG) in the biosynthesis of bacterial cell-wall peptidoglycan. The chain is UDP-N-acetylmuramoyl-L-alanyl-D-glutamate--2,6-diaminopimelate ligase from Halalkalibacterium halodurans (strain ATCC BAA-125 / DSM 18197 / FERM 7344 / JCM 9153 / C-125) (Bacillus halodurans).